Here is a 418-residue protein sequence, read N- to C-terminus: Putative ion-transport protein YfeO (418 aa).

Transmembrane regions (helical) follow at residues 10–30 (LLLSLPAVAIGIASSLILIVV), 54–74 (DSPLWIIGVLTLTGIAVGLVI), 99–119 (ALPGLIVALILGLAGGVSLGP), 120–140 (EHPIMTVNIALAVAIGARLLP), 149–169 (ILASAGTIGALFGTPVAAALI), 186–206 (LFAPLMAAAAGALTTGLFFHP), 223–243 (ILSGAIVAAIAIAAGMVAVWC), 258–278 (VLVLGIGGFILGILGVIGGPV), 300–320 (DYFLLAVIKLAALVVAAASGF), 322–342 (GGRIFPAVFVGVALGLMLHEH), 343–363 (VPAVPAAITVSCAILGIVLVV), and 371–391 (LFMAAVVVPNTTLLPLLCIVM).

It belongs to the chloride channel (TC 2.A.49) family.

The protein localises to the cell membrane. The chain is Putative ion-transport protein YfeO from Shigella boydii serotype 18 (strain CDC 3083-94 / BS512).